The following is a 180-amino-acid chain: Translation initiation factor IF-3 (180 aa).

The protein belongs to the IF-3 family. As to quaternary structure, monomer.

The protein localises to the cytoplasm. IF-3 binds to the 30S ribosomal subunit and shifts the equilibrium between 70S ribosomes and their 50S and 30S subunits in favor of the free subunits, thus enhancing the availability of 30S subunits on which protein synthesis initiation begins. The sequence is that of Translation initiation factor IF-3 from Pasteurella multocida (strain Pm70).